The primary structure comprises 420 residues: D-inositol 3-phosphate glycosyltransferase (420 aa).

Position 13 (histidine 13) interacts with 1D-myo-inositol 3-phosphate. UDP-N-acetyl-alpha-D-glucosamine contacts are provided by residues glutamine 19–proline 20 and glycine 27. 1D-myo-inositol 3-phosphate is bound by residues aspartate 24–asparagine 29, lysine 82, tyrosine 115, threonine 139, and arginine 159. Positions 233, 238, and 294 each coordinate UDP-N-acetyl-alpha-D-glucosamine. The Mg(2+) site is built by phenylalanine 303, arginine 304, and alanine 306. Residues glutamate 316 and glutamate 324 each coordinate UDP-N-acetyl-alpha-D-glucosamine. Threonine 330 contacts Mg(2+).

This sequence belongs to the glycosyltransferase group 1 family. MshA subfamily. As to quaternary structure, homodimer.

It carries out the reaction 1D-myo-inositol 3-phosphate + UDP-N-acetyl-alpha-D-glucosamine = 1D-myo-inositol 2-acetamido-2-deoxy-alpha-D-glucopyranoside 3-phosphate + UDP + H(+). In terms of biological role, catalyzes the transfer of a N-acetyl-glucosamine moiety to 1D-myo-inositol 3-phosphate to produce 1D-myo-inositol 2-acetamido-2-deoxy-glucopyranoside 3-phosphate in the mycothiol biosynthesis pathway. The polypeptide is D-inositol 3-phosphate glycosyltransferase (Pseudarthrobacter chlorophenolicus (strain ATCC 700700 / DSM 12829 / CIP 107037 / JCM 12360 / KCTC 9906 / NCIMB 13794 / A6) (Arthrobacter chlorophenolicus)).